We begin with the raw amino-acid sequence, 333 residues long: Photosystem II assembly lipoprotein Ycf48 (333 aa).

The signal sequence occupies residues 1-23 (MTRFVSSAINLLLVLVLGVSLSG). Cysteine 24 is lipidated: N-palmitoyl cysteine. A lipid anchor (S-diacylglycerol cysteine) is attached at cysteine 24.

The protein belongs to the Ycf48 family. As to quaternary structure, part of early PSII assembly complexes which includes D1 (psbA) and PsbI; not found in mature PSII. Binds to the lumenal side of PSII complexes. Interacts with YidC.

It is found in the cellular thylakoid membrane. A factor required for optimal assembly of photosystem II (PSII), acting in the early stages of PSII assembly. Also plays a role in replacement of photodamaged D1 (psbA). Assists YidC in synthesis of chlorophyll-binding proteins. The sequence is that of Photosystem II assembly lipoprotein Ycf48 from Parasynechococcus marenigrum (strain WH8102).